The primary structure comprises 436 residues: GTPase Der (436 aa).

EngA-type G domains follow at residues 4-167 (PTVA…PTEV) and 175-351 (IRFS…ESQN). GTP-binding positions include 10–17 (GRPNVGKS), 57–61 (DTGGI), 119–122 (NKVD), 181–188 (GRPNVGKS), 229–233 (DTAGM), and 294–297 (NKWD). The 85-residue stretch at 352-436 (RRISSAVLND…PIHLIARKRK (85 aa)) folds into the KH-like domain.

The protein belongs to the TRAFAC class TrmE-Era-EngA-EngB-Septin-like GTPase superfamily. EngA (Der) GTPase family. As to quaternary structure, associates with the 50S ribosomal subunit.

Its function is as follows. GTPase that plays an essential role in the late steps of ribosome biogenesis. The chain is GTPase Der from Streptococcus thermophilus (strain ATCC BAA-491 / LMD-9).